A 495-amino-acid chain; its full sequence is Altronate dehydratase (495 aa).

The protein belongs to the UxaA family. Fe(2+) is required as a cofactor. The cofactor is Mn(2+).

It carries out the reaction D-altronate = 2-dehydro-3-deoxy-D-gluconate + H2O. It functions in the pathway carbohydrate metabolism; pentose and glucuronate interconversion. Its activity is regulated as follows. Is inhibited by high concentrations of Fe(2+) (&gt; 2 mM), and by EDTA or other iron chelators in vitro. Its function is as follows. Catalyzes the dehydration of D-altronate. The sequence is that of Altronate dehydratase (uxaA) from Escherichia coli (strain K12).